Consider the following 482-residue polypeptide: Guanine nucleotide exchange factor SRM1 (482 aa).

Over residues 1–11 (MVKRTVATNGD) the composition is skewed to polar residues. The tract at residues 1–22 (MVKRTVATNGDASGAHRAKKMS) is disordered. The Nuclear localization signal motif lies at 15–26 (AHRAKKMSKTHA). RCC1 repeat units follow at residues 45-101 (PLDI…ALDE), 103-152 (SNVW…TPAK), 183-238 (NGEV…FLDE), 239-291 (EGMV…ALTK), 292-347 (DNKL…ILSQ), 349-411 (GDLY…AVAQ), and 412-466 (NGIA…SGGV). The interval 128–158 (KDMDADDSSDDEDGDLNELESTPAKIPRESF) is disordered. Residues 131-145 (DADDSSDDEDGDLNE) show a composition bias toward acidic residues. A phosphoserine mark is found at Ser135 and Ser136.

Component of a multicomponent complex composed of six to seven proteins, which has a collective molecular mass greater than 150 kDa. Interacts with GSP1 and YRB2. In terms of processing, phosphorylated; possibly by KSP1.

Its subcellular location is the nucleus. Its function is as follows. Guanine nucleotide exchange factor that promotes the exchange of GSP1/GSP2-bound GDP by GTP and controls RNA metabolism and transport. Involved in yeast pheromone response pathway and in mRNA metabolism. Involved in nuclear pore complex (NPC) assembly and required for mRNA and ribosome nuclear export. Binds chromatin and is involved NPC-mediated transcriptional control. The protein is Guanine nucleotide exchange factor SRM1 (SRM1) of Saccharomyces cerevisiae (strain ATCC 204508 / S288c) (Baker's yeast).